We begin with the raw amino-acid sequence, 860 residues long: Leucine--tRNA ligase (860 aa).

Positions 42–52 (PYPSGRLHMGH) match the 'HIGH' region motif. The short motif at 619–623 (KMSKS) is the 'KMSKS' region element. Residue K622 coordinates ATP.

The protein belongs to the class-I aminoacyl-tRNA synthetase family.

Its subcellular location is the cytoplasm. The enzyme catalyses tRNA(Leu) + L-leucine + ATP = L-leucyl-tRNA(Leu) + AMP + diphosphate. The sequence is that of Leucine--tRNA ligase from Yersinia pseudotuberculosis serotype O:3 (strain YPIII).